The sequence spans 377 residues: Acetyltransferase ple2 (377 aa).

A signal peptide spans Met1–Gly27. 4 helical membrane passes run Trp29–Asp49, Ile56–Val76, Ile176–Leu196, and Pro258–Gly278.

This sequence belongs to the wax synthase family.

The protein resides in the membrane. It functions in the pathway secondary metabolite biosynthesis; terpenoid biosynthesis. Its function is as follows. Acetyltransferase; part of the gene cluster that mediates the biosynthesis of pleuromutilin, a tricyclic diterpene showing antibacterial properties. The geranylgeranyl diphosphate (GGPP) synthase ple4 catalyzes the first step in pleuromutilin biosynthesis. GGPP is then substrate of the premutilin synthase (PS) ple3 to yield premutilin. Premutilin synthase is a bifunctional enzyme composed of the fusion of a class II diterpene cyclase (DTC) and a class I diterpene synthase (DTS), with the corresponding domains and active sites containing characteristic aspartate-rich motifs. GGPP is first converted to mutildienyl-diphosphate (MPP) at the class II DTC site. MPP is subsequently further cyclized at the class I DTS site, followed by a 1,5-hydride shift and addition of water prior to terminating deprotonation, to yield premutilin. The cytochrome P450 monooxygenases ple5 and ple6 hydroxylate premutilin at C-11 and C-3, respectively, producing 11-hydroxypremutilin and 3-hydroxypremutilin. The combination of the actions of both ple5 and ple6 leads to the production of 3,11-dihydroxypremutilin. The short chain dehydrogenase ple7 further converts 3,11-dihydroxypremutilin into mutilin. The acetyltransferase ple2 then acetylates mutilin to produce 14-O-acetylmutilin. Finally, the cytochrome P450 monooxygenase ple1 catalyzes hydroxylation on the alpha position of the acetyl side chain of 14-O-acetylmutilin to yield pleuromutilin. This Rhodocybe pseudopiperita (Clitopilus pseudopiperitus) protein is Acetyltransferase ple2.